The chain runs to 339 residues: Probable scoulerine-9-O-methyltransferase OMT3B (339 aa).

Met161 provides a ligand contact to S-adenosyl-L-methionine. Asp164 contacts substrate. S-adenosyl-L-methionine contacts are provided by residues Thr165, Gly191, Asp214, 228–229 (DV), and Lys242. 243-247 (SILHE) lines the substrate pocket. His246 (proton acceptor) is an active-site residue.

The protein belongs to the class I-like SAM-binding methyltransferase superfamily. Cation-independent O-methyltransferase family. COMT subfamily.

It carries out the reaction (S)-scoulerine + S-adenosyl-L-methionine = (S)-tetrahydrocolumbamine + S-adenosyl-L-homocysteine + H(+). It functions in the pathway alkaloid biosynthesis. In terms of biological role, methyltransferase involved in the biosynthesis of the benzylisoquinoline alkaloid noscapine. Catalyzes the conversion of (S)-scoulerine to (S)-tetrahydrocolumbamine. The protein is Probable scoulerine-9-O-methyltransferase OMT3B of Papaver somniferum (Opium poppy).